We begin with the raw amino-acid sequence, 562 residues long: Probable malate:quinone oxidoreductase (562 aa).

A disordered region spans residues 530–562 (EVPDKSATPTDPTIAPKHQHSTTHNANSEMQAL). A compositionally biased stretch (polar residues) spans 551–562 (TTHNANSEMQAL).

The protein belongs to the MQO family. The cofactor is FAD.

It catalyses the reaction (S)-malate + a quinone = a quinol + oxaloacetate. Its pathway is carbohydrate metabolism; tricarboxylic acid cycle; oxaloacetate from (S)-malate (quinone route): step 1/1. The protein is Probable malate:quinone oxidoreductase of Xylella fastidiosa (strain M12).